A 340-amino-acid polypeptide reads, in one-letter code: Glycerol-3-phosphate dehydrogenase [NAD(P)+] (340 aa).

NADPH-binding residues include serine 14, tyrosine 15, histidine 35, and lysine 109. Positions 109, 138, and 140 each coordinate sn-glycerol 3-phosphate. Alanine 142 provides a ligand contact to NADPH. Positions 194, 247, 257, 258, and 259 each coordinate sn-glycerol 3-phosphate. Catalysis depends on lysine 194, which acts as the Proton acceptor. Arginine 258 contacts NADPH. NADPH contacts are provided by valine 282 and glutamate 284.

The protein belongs to the NAD-dependent glycerol-3-phosphate dehydrogenase family.

The protein localises to the cytoplasm. It carries out the reaction sn-glycerol 3-phosphate + NAD(+) = dihydroxyacetone phosphate + NADH + H(+). It catalyses the reaction sn-glycerol 3-phosphate + NADP(+) = dihydroxyacetone phosphate + NADPH + H(+). Its pathway is membrane lipid metabolism; glycerophospholipid metabolism. Functionally, catalyzes the reduction of the glycolytic intermediate dihydroxyacetone phosphate (DHAP) to sn-glycerol 3-phosphate (G3P), the key precursor for phospholipid synthesis. This is Glycerol-3-phosphate dehydrogenase [NAD(P)+] from Photorhabdus laumondii subsp. laumondii (strain DSM 15139 / CIP 105565 / TT01) (Photorhabdus luminescens subsp. laumondii).